Consider the following 349-residue polypeptide: Protein RecA (349 aa).

Residue 65 to 72 (GPESSGKT) coordinates ATP.

The protein belongs to the RecA family.

Its subcellular location is the cytoplasm. In terms of biological role, can catalyze the hydrolysis of ATP in the presence of single-stranded DNA, the ATP-dependent uptake of single-stranded DNA by duplex DNA, and the ATP-dependent hybridization of homologous single-stranded DNAs. It interacts with LexA causing its activation and leading to its autocatalytic cleavage. The protein is Protein RecA of Azotobacter vinelandii (strain DJ / ATCC BAA-1303).